The following is an 81-amino-acid chain: Adenoregulin-related peptide (81 aa).

The signal sequence occupies residues 1–22; it reads MAFLKKSLLLVLFLGLVSLSIC. Residues 23-43 constitute a propeptide that is removed on maturation; that stretch reads EEEKRENEDEEEQEDDEQSEM. The disordered stretch occupies residues 24–46; the sequence is EEKRENEDEEEQEDDEQSEMKRG. The span at 30–40 shows a compositional bias: acidic residues; the sequence is EDEEEQEDDEQ. Isoleucine 78 is subject to Isoleucine amide. Positions 79-81 are excised as a propeptide; the sequence is GEQ.

Expressed by the skin glands.

The protein localises to the secreted. Functionally, has antibacterial activity against Gram-positive bacterium M.luteus NCT C2665 and against Gram-negative bacterium E.coli K12D31. This chain is Adenoregulin-related peptide, found in Agalychnis callidryas (Red-eyed tree frog).